We begin with the raw amino-acid sequence, 469 residues long: ATP synthase subunit beta (469 aa).

153 to 160 (GGAGVGKT) contributes to the ATP binding site.

The protein belongs to the ATPase alpha/beta chains family. F-type ATPases have 2 components, CF(1) - the catalytic core - and CF(0) - the membrane proton channel. CF(1) has five subunits: alpha(3), beta(3), gamma(1), delta(1), epsilon(1). CF(0) has three main subunits: a(1), b(2) and c(9-12). The alpha and beta chains form an alternating ring which encloses part of the gamma chain. CF(1) is attached to CF(0) by a central stalk formed by the gamma and epsilon chains, while a peripheral stalk is formed by the delta and b chains.

It is found in the cell inner membrane. The enzyme catalyses ATP + H2O + 4 H(+)(in) = ADP + phosphate + 5 H(+)(out). Produces ATP from ADP in the presence of a proton gradient across the membrane. The catalytic sites are hosted primarily by the beta subunits. This chain is ATP synthase subunit beta, found in Pseudothermotoga lettingae (strain ATCC BAA-301 / DSM 14385 / NBRC 107922 / TMO) (Thermotoga lettingae).